A 140-amino-acid chain; its full sequence is Sec-independent protein translocase protein TatB (140 aa).

Residues 2 to 22 (LPGIGFSELLLIGLAALIIIG) form a helical membrane-spanning segment. The tract at residues 90–140 (VNSAVMREHPVSPPPPATPPAPPAELPPEAAPHADSQNAPPEADPAKGDRT) is disordered. Pro residues predominate over residues 100 to 119 (VSPPPPATPPAPPAELPPEA).

This sequence belongs to the TatB family. In terms of assembly, the Tat system comprises two distinct complexes: a TatABC complex, containing multiple copies of TatA, TatB and TatC subunits, and a separate TatA complex, containing only TatA subunits. Substrates initially bind to the TatABC complex, which probably triggers association of the separate TatA complex to form the active translocon.

Its subcellular location is the cell inner membrane. Its function is as follows. Part of the twin-arginine translocation (Tat) system that transports large folded proteins containing a characteristic twin-arginine motif in their signal peptide across membranes. Together with TatC, TatB is part of a receptor directly interacting with Tat signal peptides. TatB may form an oligomeric binding site that transiently accommodates folded Tat precursor proteins before their translocation. This Hyphomonas neptunium (strain ATCC 15444) protein is Sec-independent protein translocase protein TatB.